The sequence spans 453 residues: uncharacterized protein (453 aa).

C74, C80, C83, and C162 together coordinate [4Fe-4S] cluster. S-adenosyl-L-methionine contacts are provided by Q286, Y315, E336, and D384. Residue C411 is the Nucleophile of the active site.

The protein belongs to the class I-like SAM-binding methyltransferase superfamily. RNA M5U methyltransferase family.

This is an uncharacterized protein from Staphylococcus aureus (strain MW2).